The chain runs to 175 residues: Anterior gradient protein 2 homolog (175 aa).

The first 20 residues, Met-1–Ala-20, serve as a signal peptide directing secretion. A required to promote cell adhesion region spans residues Lys-21–Leu-40. Residues Thr-24–Leu-44 form a disordered region. Basic and acidic residues predominate over residues Ala-29–Pro-38. 2 consecutive short sequence motifs (homodimer stabilization; interchain) follow at residues Ser-45–Trp-54 and Glu-60–Thr-67.

This sequence belongs to the AGR family. As to quaternary structure, monomer and homodimer. Interacts with LYPD3 and DAG1 (alphaDAG1). Interacts with MUC2; disulfide-linked. Expressed in lung, skeletal muscle, testis, liver, stomach, colon, small intestine, the goblet cells of the intestine and the mucuous neck cells of the stomach.

The protein localises to the secreted. The protein resides in the endoplasmic reticulum. Its function is as follows. Required for MUC2 post-transcriptional synthesis and secretion. May play a role in the production of mucus by intestinal cells. Proto-oncogene that may play a role in cell migration, cell differentiation and cell growth. Promotes cell adhesion. This chain is Anterior gradient protein 2 homolog (Agr2), found in Mus musculus (Mouse).